The chain runs to 416 residues: Choline/ethanolaminephosphotransferase 1 (416 aa).

The interval 1-20 (MSGHRSTRKRCGDSHPESPV) is disordered. Residue S18 is modified to Phosphoserine. T40 carries the phosphothreonine modification. N86 contacts CDP-choline. The next 2 membrane-spanning stretches (helical) occupy residues 89-108 (TIIG…FYCP) and 116-133 (LWAY…QSLD). D133 lines the Mg(2+) pocket. The N-linked (GlcNAc...) asparagine glycan is linked to N144. Residue E151 participates in CDP-choline binding. Residue D154 coordinates Mg(2+). The Proton acceptor role is filled by H155. 8 helical membrane passes run 156–176 (GCDS…VQLG), 180–199 (DWMF…AHWQ), 210–230 (IIDV…AVIG), 246–267 (MKLF…NYFR), 286–306 (VLSP…IYKK), 315–334 (HPCL…TNKL), 349–363 (TAFI…DQYF), and 368–388 (DEYI…IRYC). D158 contacts Mg(2+).

It belongs to the CDP-alcohol phosphatidyltransferase class-I family. Homodimer. Mg(2+) is required as a cofactor. The cofactor is Mn(2+).

Its subcellular location is the endoplasmic reticulum membrane. The protein resides in the nucleus membrane. The catalysed reaction is CDP-ethanolamine + a 1,2-diacyl-sn-glycerol = a 1,2-diacyl-sn-glycero-3-phosphoethanolamine + CMP + H(+). The enzyme catalyses CDP-choline + a 1,2-diacyl-sn-glycerol = a 1,2-diacyl-sn-glycero-3-phosphocholine + CMP + H(+). It catalyses the reaction 1-O-alkyl-2-acyl-sn-glycerol + CDP-choline = a 1-O-alkyl-2-acyl-sn-glycero-3-phosphocholine + CMP + H(+). It carries out the reaction a 1-O-(1Z-alkenyl)-2-acyl-sn-glycerol + CDP-choline = a 1-O-(1Z-alkenyl)-2-acyl-sn-glycero-3-phosphocholine + CMP + H(+). The catalysed reaction is 1,2-dioctanoyl-sn-glycerol + CDP-choline = 1,2-dioctanoyl-sn-glycero-3-phosphocholine + CMP + H(+). The enzyme catalyses 1,2-didecanoyl-sn-glycerol + CDP-choline = 1,2-didecanoyl-sn-glycero-3-phosphocholine + CMP + H(+). It catalyses the reaction CDP-choline + 1,2-di-(9Z-octadecenoyl)-sn-glycerol = 1,2-di-(9Z-octadecenoyl)-sn-glycero-3-phosphocholine + CMP + H(+). It carries out the reaction 1-hexadecanoyl-2-(9Z-octadecenoyl)-sn-glycerol + CDP-choline = 1-hexadecanoyl-2-(9Z-octadecenoyl)-sn-glycero-3-phosphocholine + CMP + H(+). The catalysed reaction is CDP-ethanolamine + 1,2-di-(9Z-octadecenoyl)-sn-glycerol = 1,2-di-(9Z-octadecenoyl)-sn-glycero-3-phosphoethanolamine + CMP + H(+). The enzyme catalyses 1-hexadecanoyl-2-(9Z-octadecenoyl)-sn-glycerol + CDP-ethanolamine = 1-hexadecanoyl-2-(9Z-octadecenoyl)-sn-glycero-3-phosphoethanolamine + CMP + H(+). It catalyses the reaction 1-hexadecanoyl-2-(4Z,7Z,10Z,13Z,16Z,19Z-docosahexaenoyl)-sn-glycerol + CDP-choline = 1-hexadecanoyl-2-(4Z,7Z,10Z,13Z,16Z,19Z-docosahexaenoyl)-sn-glycero-3-phosphocholine + CMP + H(+). It carries out the reaction 1,2-di-(9Z-hexadecenoyl)-sn-glycerol + CDP-choline = 1,2-di-(9Z-hexadecenoyl)-sn-glycero-3-phosphocholine + CMP + H(+). The catalysed reaction is 1,2-di-(9Z-hexadecenoyl)-sn-glycerol + CDP-ethanolamine = 1,2-di-(9Z-hexadecenoyl)-sn-glycero-3-phosphoethanolamine + CMP + H(+). The enzyme catalyses 1-O-hexadecyl-2-acetyl-sn-glycerol + CDP-choline = 1-O-hexadecyl-2-acetyl-sn-glycero-3-phosphocholine + CMP + H(+). It catalyses the reaction 1-O-hexadecyl-2-(5Z,8Z,11Z,14Z-eicosatetraenoyl)-sn-glycerol + CDP-choline = 1-O-hexadecyl-2-(5Z,8Z,11Z,14Z)-eicosatetraenoyl-sn-glycero-3-phosphocholine + CMP + H(+). The protein operates within phospholipid metabolism; phosphatidylethanolamine biosynthesis; phosphatidylethanolamine from ethanolamine: step 3/3. It functions in the pathway phospholipid metabolism; phosphatidylcholine biosynthesis; phosphatidylcholine from phosphocholine: step 2/2. Its function is as follows. Catalyzes both phosphatidylcholine and phosphatidylethanolamine biosynthesis from CDP-choline and CDP-ethanolamine, respectively. Involved in protein-dependent process of phospholipid transport to distribute phosphatidyl choline to the lumenal surface. Has a higher cholinephosphotransferase activity than ethanolaminephosphotransferase activity. This is Choline/ethanolaminephosphotransferase 1 from Rattus norvegicus (Rat).